The primary structure comprises 82 residues: Large ribosomal subunit protein uL24c (82 aa).

It belongs to the universal ribosomal protein uL24 family. In terms of assembly, part of the 50S ribosomal subunit.

The protein resides in the plastid. Its subcellular location is the chloroplast. In terms of biological role, one of two assembly initiator proteins, it binds directly to the 5'-end of the 23S rRNA, where it nucleates assembly of the 50S subunit. The polypeptide is Large ribosomal subunit protein uL24c (rpl24) (Phaeodactylum tricornutum (strain CCAP 1055/1)).